We begin with the raw amino-acid sequence, 400 residues long: PHD finger protein 24 (400 aa).

Residue glycine 2 is the site of N-myristoyl glycine attachment. The span at leucine 28–glycine 38 shows a compositional bias: basic and acidic residues. The interval leucine 28–phenylalanine 99 is disordered. Arginine 36 carries the omega-N-methylarginine modification. The residue at position 43 (serine 43) is a Phosphoserine. Threonine 47 is subject to Phosphothreonine. At serine 51 the chain carries Phosphoserine. Residues alanine 78–serine 97 show a composition bias toward basic and acidic residues. A PHD-type zinc finger spans residues asparagine 129 to asparagine 190.

This chain is PHD finger protein 24, found in Homo sapiens (Human).